Here is a 292-residue protein sequence, read N- to C-terminus: MAGLRRGAAAVAPAGTAGFGRPGRPQGRRQQELGKQRAAPRPGPRSKEKKKVNCKPKNQDEQEIPFRLREIMRSRQEMKNPISNKKRKKEAQAAFSKTLEKEAKGVEPDIAIPKFKQRKWESDRAYVRRMEQEAQHVLFLSKNQANRQPEVQAAPKKEKSERKKAFQKRRLDKARQRREEKAAERLEQELLQDTVKFGEVVLQPPELTAKPRMSVSRDQPGKKSLMLKKLLSPGSVSQPLTTSLARQRIVAEERERAVNAYRALKRLQQQRQETQSPQPPHLPPGKKPEMQL.

Positions 1–16 are enriched in low complexity; the sequence is MAGLRRGAAAVAPAGT. 4 disordered regions span residues 1 to 94, 139 to 183, 205 to 243, and 263 to 292; these read MAGL…AQAA, FLSK…EKAA, PELT…LTTS, and ALKR…EMQL. Composition is skewed to basic and acidic residues over residues 57–78, 155–164, and 173–183; these read KNQD…RQEM, PKKEKSERKK, and KARQRREEKAA. The stretch at 156–194 forms a coiled coil; it reads KKEKSERKKAFQKRRLDKARQRREEKAAERLEQELLQDT. A compositionally biased stretch (low complexity) spans 222–232; sequence KKSLMLKKLLS. Phosphoserine is present on serine 232. Over residues 234–243 the composition is skewed to polar residues; sequence GSVSQPLTTS. The stretch at 247–276 forms a coiled coil; the sequence is QRIVAEERERAVNAYRALKRLQQQRQETQS.

Its subcellular location is the chromosome. The sequence is that of Coiled-coil domain-containing protein 137 (CCDC137) from Bos taurus (Bovine).